Consider the following 908-residue polypeptide: Protein O-mannosyltransferase 1 (908 aa).

2 disordered regions span residues 1-85 and 115-160; these read MYNN…SAIN and GSVE…SGSR. The span at 21-31 shows a compositional bias: basic residues; that stretch reads QRRKTTTRSRS. 2 stretches are compositionally biased toward polar residues: residues 39-54 and 132-149; these read CTSE…NGAQ and LTAT…SPTI. A helical membrane pass occupies residues 190–210; that stretch reads FTVNLSIDLFSWTLFLLAFCT. An N-linked (GlcNAc...) asparagine glycan is attached at asparagine 265. 5 helical membrane passes run 279 to 299, 311 to 328, 331 to 351, 370 to 390, and 418 to 438; these read VPIF…APAV, WAAA…SLLT, RFVL…ACLL, AGVL…ALAL, and LSRL…VFYV. MIR domains follow at residues 473-534, 545-602, and 608-664; these read PLAV…VKRP, PDVI…VEIL, and GDSW…VEEH. 4 consecutive transmembrane segments (helical) span residues 749–769, 788–808, 813–833, and 857–877; these read VLIW…LAFY, FLMA…PYYF, LFLH…CFVV, and LALL…LPLS.

It belongs to the glycosyltransferase 39 family. In terms of assembly, interacts with tw/POMT2.

It is found in the endoplasmic reticulum membrane. It carries out the reaction a di-trans,poly-cis-dolichyl beta-D-mannosyl phosphate + L-seryl-[protein] = 3-O-(alpha-D-mannosyl)-L-seryl-[protein] + a di-trans,poly-cis-dolichyl phosphate + H(+). The catalysed reaction is a di-trans,poly-cis-dolichyl beta-D-mannosyl phosphate + L-threonyl-[protein] = 3-O-(alpha-D-mannosyl)-L-threonyl-[protein] + a di-trans,poly-cis-dolichyl phosphate + H(+). It participates in protein modification; protein glycosylation. In terms of biological role, rt/POMT1 and tw/POMT2 function as a protein O-mannosyltransferase in association with each other to generate and maintain normal muscle development. This chain is Protein O-mannosyltransferase 1, found in Drosophila pseudoobscura pseudoobscura (Fruit fly).